Here is a 346-residue protein sequence, read N- to C-terminus: Probable RNA methyltransferase PA14_40730 (346 aa).

Catalysis depends on glutamate 91, which acts as the Proton acceptor. Residues 94 to 320 (LLPRGGLCVS…TKVRNSAGQD (227 aa)) enclose the Radical SAM core domain. Cysteines 101 and 325 form a disulfide. The [4Fe-4S] cluster site is built by cysteine 108, cysteine 112, and cysteine 115. Residues 153–154 (GE), serine 183, 206–208 (SLH), and asparagine 282 contribute to the S-adenosyl-L-methionine site. The active-site S-methylcysteine intermediate is cysteine 325.

The protein belongs to the radical SAM superfamily. RlmN family. [4Fe-4S] cluster serves as cofactor.

The protein localises to the cytoplasm. This Pseudomonas aeruginosa (strain UCBPP-PA14) protein is Probable RNA methyltransferase PA14_40730.